Here is a 350-residue protein sequence, read N- to C-terminus: UDP-N-acetylenolpyruvoylglucosamine reductase (350 aa).

Residues H24 to L195 form the FAD-binding PCMH-type domain. The active site involves R172. S245 (proton donor) is an active-site residue. The active site involves E342.

It belongs to the MurB family. It depends on FAD as a cofactor.

It localises to the cytoplasm. It carries out the reaction UDP-N-acetyl-alpha-D-muramate + NADP(+) = UDP-N-acetyl-3-O-(1-carboxyvinyl)-alpha-D-glucosamine + NADPH + H(+). It functions in the pathway cell wall biogenesis; peptidoglycan biosynthesis. Cell wall formation. This Xanthomonas oryzae pv. oryzae (strain PXO99A) protein is UDP-N-acetylenolpyruvoylglucosamine reductase.